The following is a 187-amino-acid chain: HTH-type dhaKLM operon transcriptional activator DhaS (187 aa).

Residues 12-72 (IITQKIIAKA…WIFENDFAEL (61 aa)) form the HTH tetR-type domain. The H-T-H motif DNA-binding region spans 35–54 (SVSDIMQTAKIRRQTFYNYF).

As to quaternary structure, homodimer. Interacts with a homodimer of DhaQ.

Its function is as follows. In complex with DhaQ, upon activation by dihydroxyacetone, activates transcription of the dhaKLM operon. Binds the inverted repeat sequence 5'-GGACACATN(6)ATTTGTCC-3' located upstream of and partially overlapping with the -35 promoter sequence of the dhaKLM operon promoter. The sequence is that of HTH-type dhaKLM operon transcriptional activator DhaS (dhaS) from Lactococcus lactis subsp. lactis (strain IL1403) (Streptococcus lactis).